A 258-amino-acid polypeptide reads, in one-letter code: UPF0246 protein YPK_3600 (258 aa).

This sequence belongs to the UPF0246 family.

The chain is UPF0246 protein YPK_3600 from Yersinia pseudotuberculosis serotype O:3 (strain YPIII).